The chain runs to 97 residues: MKIKIDESYLSKLEQLALIRLKNEEKDKISNDLQRIIDFFEKINELELKDVEPLFHPISSGKLRKDEPLKPLNRDEALQNVKRKENGYIVGPRTYGE.

This sequence belongs to the GatC family. In terms of assembly, heterotrimer of A, B and C subunits.

It catalyses the reaction L-glutamyl-tRNA(Gln) + L-glutamine + ATP + H2O = L-glutaminyl-tRNA(Gln) + L-glutamate + ADP + phosphate + H(+). The catalysed reaction is L-aspartyl-tRNA(Asn) + L-glutamine + ATP + H2O = L-asparaginyl-tRNA(Asn) + L-glutamate + ADP + phosphate + 2 H(+). Functionally, allows the formation of correctly charged Asn-tRNA(Asn) or Gln-tRNA(Gln) through the transamidation of misacylated Asp-tRNA(Asn) or Glu-tRNA(Gln) in organisms which lack either or both of asparaginyl-tRNA or glutaminyl-tRNA synthetases. The reaction takes place in the presence of glutamine and ATP through an activated phospho-Asp-tRNA(Asn) or phospho-Glu-tRNA(Gln). This is Aspartyl/glutamyl-tRNA(Asn/Gln) amidotransferase subunit C from Sulfolobus acidocaldarius (strain ATCC 33909 / DSM 639 / JCM 8929 / NBRC 15157 / NCIMB 11770).